Consider the following 247-residue polypeptide: Spermatogenesis-associated protein 46 (247 aa).

The tract at residues 125–164 is disordered; that stretch reads QRDSCLPEDTADSVCSSSPSPENTCPREATKKSRPGPDTT. Over residues 137 to 147 the composition is skewed to polar residues; that stretch reads SVCSSSPSPEN.

It is found in the nucleus membrane. Its function is as follows. Plays a role in spermiogenesis and fertilization. This Bos taurus (Bovine) protein is Spermatogenesis-associated protein 46 (SPATA46).